Here is a 491-residue protein sequence, read N- to C-terminus: Glucose-6-phosphate exchanger SLC37A2 (491 aa).

Residues 5–25 (LAPGIWYRAFILLITFLIYTC) form a helical membrane-spanning segment. N-linked (GlcNAc...) asparagine glycosylation is found at Asn-43, Asn-52, and Asn-58. The next 5 membrane-spanning stretches (helical) occupy residues 78-98 (GAVDNAFLVAYAIGMFISGIF), 108-130 (LTAGMLLSGLFTSLFGLGYFWNI), 132-154 (VLWYFVLVQIFNGLVQTTGWPAV), 169-189 (LIMGIWNSHTSVGNILGSLLA), and 200-220 (SFVVPGVITAIMGIITFFFLI). Positions 229–257 (SPPQHHGNPEESQDQPEDPANGPSCNKES) are disordered. A run of 6 helical transmembrane segments spans residues 292 to 312 (LCLLFAKLVSYTFLYWLPLYI), 328 to 348 (TLFDVGGIIGGILAGLVSDYI), 352 to 372 (ATTCCVMLILAAPMMFLYNHV), 377 to 397 (IGISIVMLLICGALVNGPYAL), 424 to 444 (AIIDGTGSIGAALGPLLAGLI), and 452 to 472 (VFYMLIAADVLACLLLCRLVY).

It belongs to the major facilitator superfamily. Organophosphate:Pi antiporter (OPA) (TC 2.A.1.4) family.

The protein localises to the endoplasmic reticulum membrane. The enzyme catalyses D-glucose 6-phosphate(in) + phosphate(out) = D-glucose 6-phosphate(out) + phosphate(in). With respect to regulation, inhibited by vanadate but not by chlorogenic acid. Inorganic phosphate and glucose-6-phosphate antiporter. May transport cytoplasmic glucose-6-phosphate into the lumen of the endoplasmic reticulum and translocate inorganic phosphate into the opposite direction. Independent of a lumenal glucose-6-phosphatase. May not play a role in homeostatic regulation of blood glucose levels. The sequence is that of Glucose-6-phosphate exchanger SLC37A2 from Bos taurus (Bovine).